We begin with the raw amino-acid sequence, 202 residues long: Rho GDP-dissociation inhibitor (202 aa).

An N-acetylalanine modification is found at alanine 2. Threonine 27 bears the Phosphothreonine mark. Serine 40 carries the phosphoserine modification.

The protein belongs to the Rho GDI family.

The protein resides in the cytoplasm. Regulates the GDP/GTP exchange reaction of the Rho proteins by inhibiting the dissociation of GDP from them, and the subsequent binding of GTP to them. In Saccharomyces cerevisiae (strain ATCC 204508 / S288c) (Baker's yeast), this protein is Rho GDP-dissociation inhibitor (RDI1).